A 243-amino-acid polypeptide reads, in one-letter code: Linker for activation of T-cells family member 2 (243 aa).

The Extracellular portion of the chain corresponds to 1–5 (MSSGT). The helical; Signal-anchor for type III membrane protein transmembrane segment at 6-26 (ELLWPGAALLVLLGVAASLCV) threads the bilayer. S-palmitoyl cysteine attachment occurs at residues Cys25 and Cys28. The Cytoplasmic portion of the chain corresponds to 27–243 (RCSRPGAKRS…VNGEVAATEA (217 aa)). Position 44 is a phosphoserine (Ser44). Tyr58 bears the Phosphotyrosine mark. A phosphoserine mark is found at Ser59 and Ser92. Phosphotyrosine occurs at positions 136, 193, and 233. Residues 174-243 (PTSGLCPSAS…VNGEVAATEA (70 aa)) are disordered.

In terms of assembly, when phosphorylated, interacts with GRB2. May also interact with SOS1, GAB1 and CBL. Post-translationally, phosphorylated on tyrosines following cross-linking of BCR in B-cells, FCGR1 in myeloid cells, or FCER1 in mast cells; which induces the recruitment of GRB2. May be polyubiquitinated. Highly expressed in spleen, peripheral blood lymphocytes, and germinal centers of lymph nodes. Also expressed in placenta, lung, pancreas and small intestine. Present in B-cells, NK cells and monocytes. Absent from T-cells (at protein level).

Its subcellular location is the cell membrane. Functionally, involved in FCER1 (high affinity immunoglobulin epsilon receptor)-mediated signaling in mast cells. May also be involved in BCR (B-cell antigen receptor)-mediated signaling in B-cells and FCGR1 (high affinity immunoglobulin gamma Fc receptor I)-mediated signaling in myeloid cells. Couples activation of these receptors and their associated kinases with distal intracellular events through the recruitment of GRB2. This is Linker for activation of T-cells family member 2 (LAT2) from Homo sapiens (Human).